The sequence spans 181 residues: Probable pyruvoyl-dependent arginine decarboxylase (181 aa).

Residue Ser-43 is modified to Pyruvic acid (Ser).

It belongs to the PdaD family. Pyruvate is required as a cofactor.

The catalysed reaction is L-arginine + H(+) = agmatine + CO2. The chain is Probable pyruvoyl-dependent arginine decarboxylase from Chlorobium phaeobacteroides (strain BS1).